The following is a 328-amino-acid chain: Methionyl-tRNA formyltransferase (328 aa).

Residue 110–113 (SLLP) coordinates (6S)-5,6,7,8-tetrahydrofolate.

This sequence belongs to the Fmt family.

The enzyme catalyses L-methionyl-tRNA(fMet) + (6R)-10-formyltetrahydrofolate = N-formyl-L-methionyl-tRNA(fMet) + (6S)-5,6,7,8-tetrahydrofolate + H(+). In terms of biological role, attaches a formyl group to the free amino group of methionyl-tRNA(fMet). The formyl group appears to play a dual role in the initiator identity of N-formylmethionyl-tRNA by promoting its recognition by IF2 and preventing the misappropriation of this tRNA by the elongation apparatus. The sequence is that of Methionyl-tRNA formyltransferase from Prochlorococcus marinus (strain MIT 9312).